Consider the following 262-residue polypeptide: MEHLERCEWLLRGTLVRAAVRRYLPWALVASMLAGSLLKELSPLPESYLSNKRNVLNVYFVKVAWAWTFCLLLPFIALTNYHLTGKAGLVLRRLSTLLVGTAIWYICTSIFSNIEHYTGSCYQSPALEGVRKEHQSKQQCHQEGGFWHGFDISGHSFLLTFCALMIVEEMSVLHEVKTDRSHCLHTAITTLVVALGILTFIWVLMFLCTAVYFHNLSQKVFGTLFGLLSWYGTYGFWYPKAFSPGLPPQSCSLNLKQDSYKK.

The Cytoplasmic segment spans residues 1–23 (MEHLERCEWLLRGTLVRAAVRRY). A helical membrane pass occupies residues 24–44 (LPWALVASMLAGSLLKELSPL). The Lumenal portion of the chain corresponds to 45–57 (PESYLSNKRNVLN). The helical transmembrane segment at 58 to 78 (VYFVKVAWAWTFCLLLPFIAL) threads the bilayer. Residues 79 to 93 (TNYHLTGKAGLVLRR) lie on the Cytoplasmic side of the membrane. A helical transmembrane segment spans residues 94-114 (LSTLLVGTAIWYICTSIFSNI). The Lumenal segment spans residues 115-145 (EHYTGSCYQSPALEGVRKEHQSKQQCHQEGG). Residues 146–166 (FWHGFDISGHSFLLTFCALMI) form a helical membrane-spanning segment. Residue H155 is part of the active site. At 167–190 (VEEMSVLHEVKTDRSHCLHTAITT) the chain is on the cytoplasmic side. A helical membrane pass occupies residues 191–211 (LVVALGILTFIWVLMFLCTAV). At 212–218 (YFHNLSQ) the chain is on the lumenal side. The active site involves H214. A helical transmembrane segment spans residues 219 to 239 (KVFGTLFGLLSWYGTYGFWYP). Over 240 to 262 (KAFSPGLPPQSCSLNLKQDSYKK) the chain is Cytoplasmic.

The protein belongs to the FIT family. FIT2 subfamily. Widely expressed.

The protein resides in the endoplasmic reticulum membrane. The catalysed reaction is an acyl-CoA + H2O = an acyl-4'-phosphopantetheine + adenosine 3',5'-bisphosphate + 2 H(+). It carries out the reaction (9Z)-octadecenoyl-CoA + H2O = S-(9Z-octadecenoyl)-4'-phosphopantetheine + adenosine 3',5'-bisphosphate + 2 H(+). It catalyses the reaction (5Z,8Z,11Z,14Z)-eicosatetraenoyl-CoA + H2O = S-(5Z,8Z,11Z,14Z-eicosatetraenoyl)-4'-phosphopantetheine + adenosine 3',5'-bisphosphate + 2 H(+). The enzyme catalyses hexadecanoyl-CoA + H2O = S-hexadecanoyl-4'-phosphopantetheine + adenosine 3',5'-bisphosphate + 2 H(+). Functionally, fatty acyl-coenzyme A (CoA) diphosphatase that hydrolyzes fatty acyl-CoA to yield acyl-4'-phosphopantetheine and adenosine 3',5'-bisphosphate. Preferentially hydrolyzes unsaturated long-chain acyl-CoA substrates such as oleoyl-CoA/(9Z)-octadecenoyl-CoA and arachidonoyl-CoA/(5Z,8Z,11Z,14Z)-eicosatetraenoyl-CoA in the endoplasmic reticulum (ER) lumen. This catalytic activity is required for maintaining ER structure and for lipid droplets (LDs) biogenesis, which are lipid storage organelles involved in maintaining lipid and energy homeostasis. Directly binds to diacylglycerol (DAGs) and triacylglycerol, which is also important for LD biogenesis. May support directional budding of nacent LDs from the ER into the cytosol by reducing DAG levels at sites of LD formation. Plays a role in the regulation of cell morphology and cytoskeletal organization. This chain is Acyl-coenzyme A diphosphatase FITM2, found in Homo sapiens (Human).